We begin with the raw amino-acid sequence, 342 residues long: MTKSLFRQSFLTDTLDVHIDVAPAEQVLSNGVQLKLYQRGVLEVIPENPTQETKNIIISCGIHGDETAPMELVDSIIKDIESGFQKVDARCLFIIAHPESTLAHTRFLEENLNRLFDEKEHEPTKELAIADTLKLLVRDFYQDTEPKTRWHLDLHCAIRGSKHYTFAVSPKTRHPVRSKALVDFLDSAHIEAVLLSNSPSSTFSWYSAENYSAQALTMELGRVARIGENALDRLTAFDLALRNLIAEAQPEHLSKPCIKYRVSRTIVRLHDDFDFMFDDNVENFTSFVHGEVFGHDGDKPLMAKNDNEAIVFPNRHVAIGQRAALMVCEVKTRFEEGELVYD.

His-63, Glu-66, and His-155 together coordinate Zn(2+). Glu-219 is a catalytic residue.

The protein belongs to the AspA/AstE family. Succinylglutamate desuccinylase subfamily. Zn(2+) is required as a cofactor.

The catalysed reaction is N-succinyl-L-glutamate + H2O = L-glutamate + succinate. Its pathway is amino-acid degradation; L-arginine degradation via AST pathway; L-glutamate and succinate from L-arginine: step 5/5. Transforms N(2)-succinylglutamate into succinate and glutamate. The chain is Succinylglutamate desuccinylase from Vibrio parahaemolyticus serotype O3:K6 (strain RIMD 2210633).